Consider the following 359-residue polypeptide: ATP-dependent kinase YFH7 (359 aa).

ATP is bound at residue 31–39 (GPPGSGKST).

The protein belongs to the YFH7 family.

In terms of biological role, ATP-dependent kinase that could be involved in endoplasmic reticulum membrane assembly. In Vanderwaltozyma polyspora (strain ATCC 22028 / DSM 70294 / BCRC 21397 / CBS 2163 / NBRC 10782 / NRRL Y-8283 / UCD 57-17) (Kluyveromyces polysporus), this protein is ATP-dependent kinase YFH7 (YFH7).